The chain runs to 193 residues: Acyl carrier protein phosphodiesterase (193 aa).

This sequence belongs to the AcpH family.

The enzyme catalyses holo-[ACP] + H2O = apo-[ACP] + (R)-4'-phosphopantetheine + H(+). Its function is as follows. Converts holo-ACP to apo-ACP by hydrolytic cleavage of the phosphopantetheine prosthetic group from ACP. The chain is Acyl carrier protein phosphodiesterase from Escherichia coli O127:H6 (strain E2348/69 / EPEC).